A 254-amino-acid polypeptide reads, in one-letter code: Major prion protein (254 aa).

The signal sequence occupies residues 1–22 (MANLSYWLLALFVATWTDVGLC). The interaction with GRB2, ERI3 and SYN1 stretch occupies residues 23-231 (KKRPKPGGWN…SQAYYDGRRS (209 aa)). The disordered stretch occupies residues 25–104 (RPKPGGWNTG…THNQWNKPSK (80 aa)). Repeat copies occupy residues 51 to 59 (PQGGGTWGQ), 60 to 67 (PHGGGWGQ), 68 to 75 (PHGGGWGQ), 76 to 83 (PHGGGWGQ), and 84 to 91 (PHGGGWGQ). The 5 X 8 AA tandem repeats of P-H-G-G-G-W-G-Q stretch occupies residues 51 to 91 (PQGGGTWGQPHGGGWGQPHGGGWGQPHGGGWGQPHGGGWGQ). Gly residues predominate over residues 52-95 (QGGGTWGQPHGGGWGQPHGGGWGQPHGGGWGQPHGGGWGQGGGT). H61, G62, G63, H69, G70, G71, H77, G78, G79, H85, G86, and G87 together coordinate Cu(2+). The segment at 90 to 231 (GQGGGTHNQW…SQAYYDGRRS (142 aa)) is prP27-30 (protease resistant core). A disulfide bridge links C179 with C214. N181 and N197 each carry an N-linked (GlcNAc...) asparagine glycan. The GPI-anchor amidated serine moiety is linked to residue S231. The propeptide at 232-254 (SAVLFSSPPVILLISFLIFLIVG) is removed in mature form.

Belongs to the prion family. As to quaternary structure, monomer and homodimer. Has a tendency to aggregate into amyloid fibrils containing a cross-beta spine, formed by a steric zipper of superposed beta-strands. Soluble oligomers may represent an intermediate stage on the path to fibril formation. Copper binding may promote oligomerization. Interacts with GRB2, APP, ERI3/PRNPIP and SYN1. Mislocalized cytosolically exposed PrP interacts with MGRN1; this interaction alters MGRN1 subcellular location and causes lysosomal enlargement. Interacts with KIAA1191.

The protein localises to the cell membrane. Its subcellular location is the golgi apparatus. In terms of biological role, its primary physiological function is unclear. Has cytoprotective activity against internal or environmental stresses. May play a role in neuronal development and synaptic plasticity. May be required for neuronal myelin sheath maintenance. May play a role in iron uptake and iron homeostasis. Soluble oligomers are toxic to cultured neuroblastoma cells and induce apoptosis (in vitro). Association with GPC1 (via its heparan sulfate chains) targets PRNP to lipid rafts. Also provides Cu(2+) or Zn(2+) for the ascorbate-mediated GPC1 deaminase degradation of its heparan sulfate side chains. The polypeptide is Major prion protein (PRNP) (Cricetulus griseus (Chinese hamster)).